The primary structure comprises 213 residues: Pyridoxine/pyridoxamine 5'-phosphate oxidase (213 aa).

Substrate-binding positions include 8–11 (RREY) and Lys66. FMN-binding positions include 61–66 (RIVLLK), 76–77 (YT), Arg82, Lys83, and Gln105. Substrate is bound by residues Tyr123, Arg127, and Ser131. Residues 140-141 (QS) and Trp185 contribute to the FMN site. Residue 191 to 193 (RLH) participates in substrate binding. Arg195 contacts FMN.

This sequence belongs to the pyridoxamine 5'-phosphate oxidase family. In terms of assembly, homodimer. FMN serves as cofactor.

The enzyme catalyses pyridoxamine 5'-phosphate + O2 + H2O = pyridoxal 5'-phosphate + H2O2 + NH4(+). It carries out the reaction pyridoxine 5'-phosphate + O2 = pyridoxal 5'-phosphate + H2O2. It functions in the pathway cofactor metabolism; pyridoxal 5'-phosphate salvage; pyridoxal 5'-phosphate from pyridoxamine 5'-phosphate: step 1/1. It participates in cofactor metabolism; pyridoxal 5'-phosphate salvage; pyridoxal 5'-phosphate from pyridoxine 5'-phosphate: step 1/1. Functionally, catalyzes the oxidation of either pyridoxine 5'-phosphate (PNP) or pyridoxamine 5'-phosphate (PMP) into pyridoxal 5'-phosphate (PLP). The polypeptide is Pyridoxine/pyridoxamine 5'-phosphate oxidase (Pseudoalteromonas atlantica (strain T6c / ATCC BAA-1087)).